We begin with the raw amino-acid sequence, 108 residues long: MDSLALGRWRQRRAEDLQVPGDVKRVCRRLEASGHERGCHQVNACALASWGPEDRELPSRGCLPAPRPESGQGRLSTGISQNGGRSSAQPCPRCIAGESGHFSHTKNH.

The segment at 56–108 (ELPSRGCLPAPRPESGQGRLSTGISQNGGRSSAQPCPRCIAGESGHFSHTKNH) is disordered. The span at 73–89 (GRLSTGISQNGGRSSAQ) shows a compositional bias: polar residues.

This is an uncharacterized protein from Homo sapiens (Human).